The sequence spans 336 residues: N-acetyl-gamma-glutamyl-phosphate reductase (336 aa).

Cys156 is a catalytic residue.

This sequence belongs to the NAGSA dehydrogenase family. Type 1 subfamily.

It is found in the cytoplasm. The enzyme catalyses N-acetyl-L-glutamate 5-semialdehyde + phosphate + NADP(+) = N-acetyl-L-glutamyl 5-phosphate + NADPH + H(+). Its pathway is amino-acid biosynthesis; L-arginine biosynthesis; N(2)-acetyl-L-ornithine from L-glutamate: step 3/4. Its function is as follows. Catalyzes the NADPH-dependent reduction of N-acetyl-5-glutamyl phosphate to yield N-acetyl-L-glutamate 5-semialdehyde. This Moritella abyssi protein is N-acetyl-gamma-glutamyl-phosphate reductase.